Consider the following 80-residue polypeptide: Transcription elongation factor 1 homolog (80 aa).

The Zn(2+) site is built by Cys25, Cys28, Cys49, and Cys52.

The protein belongs to the ELOF1 family.

It is found in the nucleus. Functionally, transcription elongation factor implicated in the maintenance of proper chromatin structure in actively transcribed regions. The chain is Transcription elongation factor 1 homolog from Encephalitozoon cuniculi (strain GB-M1) (Microsporidian parasite).